A 488-amino-acid polypeptide reads, in one-letter code: Ribulose bisphosphate carboxylase large chain (488 aa).

Substrate contacts are provided by Asn-127 and Thr-177. Lys-179 serves as the catalytic Proton acceptor. A substrate-binding site is contributed by Lys-181. Residues Lys-205, Asp-207, and Glu-208 each contribute to the Mg(2+) site. At Lys-205 the chain carries N6-carboxylysine. Catalysis depends on His-297, which acts as the Proton acceptor. Residues Arg-298, His-330, and Ser-382 each coordinate substrate.

Belongs to the RuBisCO large chain family. Type I subfamily. In terms of assembly, heterohexadecamer of 8 large chains and 8 small chains. The cofactor is Mg(2+).

The protein localises to the plastid. The protein resides in the chloroplast. The enzyme catalyses 2 (2R)-3-phosphoglycerate + 2 H(+) = D-ribulose 1,5-bisphosphate + CO2 + H2O. The catalysed reaction is D-ribulose 1,5-bisphosphate + O2 = 2-phosphoglycolate + (2R)-3-phosphoglycerate + 2 H(+). RuBisCO catalyzes two reactions: the carboxylation of D-ribulose 1,5-bisphosphate, the primary event in carbon dioxide fixation, as well as the oxidative fragmentation of the pentose substrate in the photorespiration process. Both reactions occur simultaneously and in competition at the same active site. The sequence is that of Ribulose bisphosphate carboxylase large chain from Guillardia theta (Cryptophyte).